The sequence spans 394 residues: Elongation factor Tu (394 aa).

The region spanning lysine 10–valine 204 is the tr-type G domain. Positions glycine 19–threonine 26 are G1. Position 19 to 26 (glycine 19 to threonine 26) interacts with GTP. Residue threonine 26 coordinates Mg(2+). A G2 region spans residues glycine 60 to serine 64. Positions aspartate 81 to glycine 84 are G3. GTP contacts are provided by residues aspartate 81–histidine 85 and asparagine 136–aspartate 139. A G4 region spans residues asparagine 136–aspartate 139. A G5 region spans residues serine 174–leucine 176.

Belongs to the TRAFAC class translation factor GTPase superfamily. Classic translation factor GTPase family. EF-Tu/EF-1A subfamily. As to quaternary structure, monomer.

The protein resides in the cytoplasm. The catalysed reaction is GTP + H2O = GDP + phosphate + H(+). Functionally, GTP hydrolase that promotes the GTP-dependent binding of aminoacyl-tRNA to the A-site of ribosomes during protein biosynthesis. The sequence is that of Elongation factor Tu from Rickettsia parkeri.